Consider the following 148-residue polypeptide: Putative pre-16S rRNA nuclease (148 aa).

This sequence belongs to the YqgF nuclease family.

It localises to the cytoplasm. Functionally, could be a nuclease involved in processing of the 5'-end of pre-16S rRNA. This is Putative pre-16S rRNA nuclease from Colwellia psychrerythraea (strain 34H / ATCC BAA-681) (Vibrio psychroerythus).